Here is a 659-residue protein sequence, read N- to C-terminus: Exocyst complex component 5 (659 aa).

Residues 1-58 are a coiled coil; that stretch reads MRFEEEIGSLQMLCDQFQNKINTLEKQMNEEKKDYVQKLHRLHEKNGEAIDKMKQLDH.

Belongs to the SEC10 family. In terms of assembly, the exocyst complex is composed of sec-3/exoc1, sec-5/exoc2, sec-6/exoc3, sec-8/exoc4, sec-10/exoc5, sec-15/exoc6, exo-70/exoc7 and exo-84/exoc8.

In terms of biological role, component of the exocyst complex involved in the docking of exocytic vesicles with fusion sites on the plasma membrane. In Caenorhabditis elegans, this protein is Exocyst complex component 5 (sec-10).